Reading from the N-terminus, the 324-residue chain is Aspartate carbamoyltransferase catalytic subunit (324 aa).

Positions 55 and 56 each coordinate carbamoyl phosphate. Lys83 is a binding site for L-aspartate. Positions 105, 135, and 138 each coordinate carbamoyl phosphate. 2 residues coordinate L-aspartate: Arg173 and Arg227. Carbamoyl phosphate-binding residues include Gly268 and Pro269.

This sequence belongs to the aspartate/ornithine carbamoyltransferase superfamily. ATCase family. In terms of assembly, heterododecamer (2C3:3R2) of six catalytic PyrB chains organized as two trimers (C3), and six regulatory PyrI chains organized as three dimers (R2).

The catalysed reaction is carbamoyl phosphate + L-aspartate = N-carbamoyl-L-aspartate + phosphate + H(+). Its pathway is pyrimidine metabolism; UMP biosynthesis via de novo pathway; (S)-dihydroorotate from bicarbonate: step 2/3. Functionally, catalyzes the condensation of carbamoyl phosphate and aspartate to form carbamoyl aspartate and inorganic phosphate, the committed step in the de novo pyrimidine nucleotide biosynthesis pathway. The sequence is that of Aspartate carbamoyltransferase catalytic subunit from Nocardioides sp. (strain ATCC BAA-499 / JS614).